Here is a 187-residue protein sequence, read N- to C-terminus: ATP synthase subunit b, chloroplastic (187 aa).

The chain crosses the membrane as a helical span at residues Ile34 to Leu56.

It belongs to the ATPase B chain family. As to quaternary structure, F-type ATPases have 2 components, F(1) - the catalytic core - and F(0) - the membrane proton channel. F(1) has five subunits: alpha(3), beta(3), gamma(1), delta(1), epsilon(1). F(0) has four main subunits: a(1), b(1), b'(1) and c(10-14). The alpha and beta chains form an alternating ring which encloses part of the gamma chain. F(1) is attached to F(0) by a central stalk formed by the gamma and epsilon chains, while a peripheral stalk is formed by the delta, b and b' chains.

It localises to the plastid. It is found in the chloroplast thylakoid membrane. Functionally, f(1)F(0) ATP synthase produces ATP from ADP in the presence of a proton or sodium gradient. F-type ATPases consist of two structural domains, F(1) containing the extramembraneous catalytic core and F(0) containing the membrane proton channel, linked together by a central stalk and a peripheral stalk. During catalysis, ATP synthesis in the catalytic domain of F(1) is coupled via a rotary mechanism of the central stalk subunits to proton translocation. In terms of biological role, component of the F(0) channel, it forms part of the peripheral stalk, linking F(1) to F(0). This is ATP synthase subunit b, chloroplastic from Pleurastrum terricola (Filamentous green alga).